Reading from the N-terminus, the 86-residue chain is High affinity immunoglobulin epsilon receptor subunit gamma (86 aa).

A signal peptide spans 1–18 (MYPAVVLLLLLLVEQAAA). Over 19–23 (LGEPQ) the chain is Extracellular. Residues 24 to 44 (LCYILDAILFLYGIILTLLYC) traverse the membrane as a helical segment. Residues 45 to 86 (RLKIQVRKATVASYEKPDGIYTGLSTRNQETYETLKHEKPPQ) lie on the Cytoplasmic side of the membrane. An ITAM domain is found at 54–82 (TVASYEKPDGIYTGLSTRNQETYETLKHE). At tyrosine 65 the chain carries Phosphotyrosine. Serine 69 is subject to Phosphoserine. A Phosphotyrosine modification is found at tyrosine 76. Threonine 78 carries the phosphothreonine modification.

Belongs to the CD3Z/FCER1G family. In terms of assembly, igE Fc receptor is a tetramer of an alpha chain, a beta chain, and two disulfide linked gamma chains. Associates with FCGR1A; forms a functional signaling complex. The signaling subunit of immunoglobulin gamma (IgG) Fc receptor complex. As a homodimer or a heterodimer of CD247 and FCER1G, associates with the ligand binding subunit FCGR3A to form a functional receptor complex. Associates with CLEC6A. Interacts with CLEC4E. Interacts (via ITAM domain) with SYK (via SH2 domains); activates SYK, enabling integrin-mediated activation of neutrophils and macrophages. Interacts with CSF2RB and recruits SYK in response to IL3 stimulation; this interaction is direct. Interacts with CD300LH; the interaction may be indirect. Interacts with CD300LD. Interacts with TARM1.

It is found in the cell membrane. Adapter protein containing an immunoreceptor tyrosine-based activation motif (ITAM) that transduces activation signals from various immunoreceptors. As a component of the high-affinity immunoglobulin E (IgE) receptor, mediates allergic inflammatory signaling in mast cells. As a constitutive component of interleukin-3 receptor complex, selectively mediates interleukin 4/IL4 production by basophils priming T-cells toward effector T-helper 2 subset. Associates with pattern recognition receptors CLEC4D and CLEC4E to form a functional signaling complex in myeloid cells. Binding of mycobacterial trehalose 6,6'-dimycolate (TDM) to this receptor complex leads to phosphorylation of ITAM, triggering activation of SYK, CARD9 and NF-kappa-B, consequently driving maturation of antigen-presenting cells and shaping antigen-specific priming of T-cells toward effector T-helper 1 and T-helper 17 cell subtypes. May function cooperatively with other activating receptors. Functionally linked to integrin beta-2/ITGB2-mediated neutrophil activation. Also involved in integrin alpha-2/ITGA2-mediated platelet activation. The sequence is that of High affinity immunoglobulin epsilon receptor subunit gamma (FCER1G) from Cavia porcellus (Guinea pig).